The following is a 312-amino-acid chain: Deoxyribonuclease Tat-D (312 aa).

Residues Glu124, His161, His187, and Asp235 each coordinate a divalent metal cation.

The protein belongs to the metallo-dependent hydrolases superfamily. TatD-type hydrolase family. A divalent metal cation serves as cofactor.

Its subcellular location is the cytoplasm. It localises to the nucleus. Functionally, has both endo- and exonuclease activities. Incises double-stranded DNA without obvious specificity via its endonuclease activity and excises the DNA from the 3'-to 5'-end by its exonuclease activity. May have a role in apoptosis. This Schizosaccharomyces pombe (strain 972 / ATCC 24843) (Fission yeast) protein is Deoxyribonuclease Tat-D.